A 197-amino-acid chain; its full sequence is HTH-type transcriptional regulator BetI (197 aa).

Residues 8 to 68 (PIRRQQLIEA…ATMRYLMNAL (61 aa)) form the HTH tetR-type domain. The segment at residues 31–50 (SIALIARLAGVSNGIISHYF) is a DNA-binding region (H-T-H motif).

It functions in the pathway amine and polyamine biosynthesis; betaine biosynthesis via choline pathway [regulation]. In terms of biological role, repressor involved in the biosynthesis of the osmoprotectant glycine betaine. It represses transcription of the choline transporter BetT and the genes of BetAB involved in the synthesis of glycine betaine. This is HTH-type transcriptional regulator BetI from Pseudomonas fluorescens (strain SBW25).